A 62-amino-acid polypeptide reads, in one-letter code: Large ribosomal subunit protein uL15 (62 aa).

Belongs to the universal ribosomal protein uL15 family.

The sequence is that of Large ribosomal subunit protein uL15 (RPL28) from Candida albicans (Yeast).